The chain runs to 157 residues: Transcriptional repressor NrdR (157 aa).

The segment at 1–26 is disordered; the sequence is MRCPKCGGSKSSVIDSRQAEDGNTIR. The segment at 3 to 34 is a zinc-finger region; sequence CPKCGGSKSSVIDSRQAEDGNTIRRRRECEDC. Positions 17 to 26 are enriched in basic and acidic residues; that stretch reads RQAEDGNTIR. The ATP-cone domain maps to 49–139; that stretch reads LVVVKKDGTR…VYRSFKDVGE (91 aa).

This sequence belongs to the NrdR family. The cofactor is Zn(2+).

Its function is as follows. Negatively regulates transcription of bacterial ribonucleotide reductase nrd genes and operons by binding to NrdR-boxes. The sequence is that of Transcriptional repressor NrdR from Streptococcus gordonii (strain Challis / ATCC 35105 / BCRC 15272 / CH1 / DL1 / V288).